Reading from the N-terminus, the 213-residue chain is ATP-dependent Clp protease proteolytic subunit (213 aa).

Ser-114 (nucleophile) is an active-site residue. His-139 is a catalytic residue.

This sequence belongs to the peptidase S14 family. As to quaternary structure, fourteen ClpP subunits assemble into 2 heptameric rings which stack back to back to give a disk-like structure with a central cavity, resembling the structure of eukaryotic proteasomes.

Its subcellular location is the cytoplasm. It carries out the reaction Hydrolysis of proteins to small peptides in the presence of ATP and magnesium. alpha-casein is the usual test substrate. In the absence of ATP, only oligopeptides shorter than five residues are hydrolyzed (such as succinyl-Leu-Tyr-|-NHMec, and Leu-Tyr-Leu-|-Tyr-Trp, in which cleavage of the -Tyr-|-Leu- and -Tyr-|-Trp bonds also occurs).. In terms of biological role, cleaves peptides in various proteins in a process that requires ATP hydrolysis. Has a chymotrypsin-like activity. Plays a major role in the degradation of misfolded proteins. This chain is ATP-dependent Clp protease proteolytic subunit, found in Pseudomonas putida (strain ATCC 47054 / DSM 6125 / CFBP 8728 / NCIMB 11950 / KT2440).